A 372-amino-acid chain; its full sequence is Cytochrome b (372 aa).

4 helical membrane passes run F25–I45, W69–I90, W105–L125, and F170–M190. The heme b site is built by H75 and H89. H174 and H188 together coordinate heme b. H193 provides a ligand contact to a ubiquinone. A run of 4 helical transmembrane segments spans residues H218–T238, L280–H300, L312–T332, and F339–P358.

It belongs to the cytochrome b family. In terms of assembly, the cytochrome bc1 complex contains 3 respiratory subunits (MT-CYB, CYC1 and UQCRFS1), 2 core proteins (UQCRC1 and UQCRC2) and probably 6 low-molecular weight proteins. It depends on heme b as a cofactor.

It is found in the mitochondrion inner membrane. Component of the ubiquinol-cytochrome c reductase complex (complex III or cytochrome b-c1 complex) that is part of the mitochondrial respiratory chain. The b-c1 complex mediates electron transfer from ubiquinol to cytochrome c. Contributes to the generation of a proton gradient across the mitochondrial membrane that is then used for ATP synthesis. This chain is Cytochrome b (MT-CYB), found in Pantherophis vulpinus (Western fox snake).